The primary structure comprises 338 residues: Glycerol-3-phosphate dehydrogenase [NAD(P)+] (338 aa).

NADPH is bound by residues Ser13, Trp14, and Lys108. Residues Lys108, Gly139, and Ser141 each coordinate sn-glycerol 3-phosphate. Ala143 serves as a coordination point for NADPH. 5 residues coordinate sn-glycerol 3-phosphate: Lys194, Asp247, Ser257, Arg258, and Asn259. Residue Lys194 is the Proton acceptor of the active site. Arg258 is an NADPH binding site. Residues Val282 and Glu284 each coordinate NADPH.

Belongs to the NAD-dependent glycerol-3-phosphate dehydrogenase family.

Its subcellular location is the cytoplasm. The catalysed reaction is sn-glycerol 3-phosphate + NAD(+) = dihydroxyacetone phosphate + NADH + H(+). The enzyme catalyses sn-glycerol 3-phosphate + NADP(+) = dihydroxyacetone phosphate + NADPH + H(+). Its pathway is membrane lipid metabolism; glycerophospholipid metabolism. Catalyzes the reduction of the glycolytic intermediate dihydroxyacetone phosphate (DHAP) to sn-glycerol 3-phosphate (G3P), the key precursor for phospholipid synthesis. The polypeptide is Glycerol-3-phosphate dehydrogenase [NAD(P)+] (Streptococcus agalactiae serotype III (strain NEM316)).